The following is a 277-amino-acid chain: Large ribosomal subunit protein uL2 (277 aa).

The interval 227–277 (VMNPVDHPHGGGEGRTSGGRHPVTPWGVPTKGKKTRSKTKASDRLIMRRRK) is disordered. The segment covering 266–277 (KASDRLIMRRRK) has biased composition (basic and acidic residues).

Belongs to the universal ribosomal protein uL2 family. In terms of assembly, part of the 50S ribosomal subunit. Forms a bridge to the 30S subunit in the 70S ribosome.

Functionally, one of the primary rRNA binding proteins. Required for association of the 30S and 50S subunits to form the 70S ribosome, for tRNA binding and peptide bond formation. It has been suggested to have peptidyltransferase activity; this is somewhat controversial. Makes several contacts with the 16S rRNA in the 70S ribosome. The chain is Large ribosomal subunit protein uL2 from Magnetococcus marinus (strain ATCC BAA-1437 / JCM 17883 / MC-1).